A 126-amino-acid polypeptide reads, in one-letter code: Urease subunit beta (126 aa).

It belongs to the urease beta subunit family. As to quaternary structure, heterotrimer of UreA (gamma), UreB (beta) and UreC (alpha) subunits. Three heterotrimers associate to form the active enzyme.

The protein localises to the cytoplasm. The enzyme catalyses urea + 2 H2O + H(+) = hydrogencarbonate + 2 NH4(+). The protein operates within nitrogen metabolism; urea degradation; CO(2) and NH(3) from urea (urease route): step 1/1. The polypeptide is Urease subunit beta (Frankia casuarinae (strain DSM 45818 / CECT 9043 / HFP020203 / CcI3)).